A 157-amino-acid chain; its full sequence is ATP synthase subunit b (157 aa).

The helical transmembrane segment at 7 to 29 (LVSQAIAFSIFIWFTTKFVWPYL) threads the bilayer.

Belongs to the ATPase B chain family. In terms of assembly, F-type ATPases have 2 components, F(1) - the catalytic core - and F(0) - the membrane proton channel. F(1) has five subunits: alpha(3), beta(3), gamma(1), delta(1), epsilon(1). F(0) has three main subunits: a(1), b(2) and c(10-14). The alpha and beta chains form an alternating ring which encloses part of the gamma chain. F(1) is attached to F(0) by a central stalk formed by the gamma and epsilon chains, while a peripheral stalk is formed by the delta and b chains.

The protein resides in the cell inner membrane. Its function is as follows. F(1)F(0) ATP synthase produces ATP from ADP in the presence of a proton or sodium gradient. F-type ATPases consist of two structural domains, F(1) containing the extramembraneous catalytic core and F(0) containing the membrane proton channel, linked together by a central stalk and a peripheral stalk. During catalysis, ATP synthesis in the catalytic domain of F(1) is coupled via a rotary mechanism of the central stalk subunits to proton translocation. In terms of biological role, component of the F(0) channel, it forms part of the peripheral stalk, linking F(1) to F(0). This Nitrosomonas eutropha (strain DSM 101675 / C91 / Nm57) protein is ATP synthase subunit b.